The chain runs to 155 residues: Small ribosomal subunit protein uS7c (155 aa).

It belongs to the universal ribosomal protein uS7 family. Part of the 30S ribosomal subunit.

The protein localises to the plastid. It is found in the chloroplast. One of the primary rRNA binding proteins, it binds directly to 16S rRNA where it nucleates assembly of the head domain of the 30S subunit. The sequence is that of Small ribosomal subunit protein uS7c (rps7) from Aristolochia macrophylla (Dutchman's pipe vine).